The sequence spans 83 residues: Mitochondrial import inner membrane translocase subunit Tim8 B (83 aa).

Position 2 is an N-acetylalanine (Ala-2). The short motif at 36–59 (CWDKCVEKPGSRLDSRTENCLSSC) is the Twin CX3C motif element. Intrachain disulfides connect Cys-36/Cys-59 and Cys-40/Cys-55.

It belongs to the small Tim family. As to quaternary structure, heterohexamer; possibly composed of 3 copies of TIMM8B and 3 copies of TIMM13, named soluble 70 kDa complex. Associates with the TIM22 complex, whose core is composed of TIMM22.

It is found in the mitochondrion inner membrane. Functionally, probable mitochondrial intermembrane chaperone that participates in the import and insertion of some multi-pass transmembrane proteins into the mitochondrial inner membrane. Also required for the transfer of beta-barrel precursors from the TOM complex to the sorting and assembly machinery (SAM complex) of the outer membrane. Acts as a chaperone-like protein that protects the hydrophobic precursors from aggregation and guide them through the mitochondrial intermembrane space. The polypeptide is Mitochondrial import inner membrane translocase subunit Tim8 B (Timm8b) (Mus musculus (Mouse)).